Consider the following 488-residue polypeptide: 3-octaprenyl-4-hydroxybenzoate carboxy-lyase (488 aa).

Asn-172 is a Mn(2+) binding site. Residues 175–177 (IYR), 189–191 (RWL), and 194–195 (RG) each bind prenylated FMN. Position 238 (Glu-238) interacts with Mn(2+). The active-site Proton donor is the Asp-287.

This sequence belongs to the UbiD family. As to quaternary structure, homohexamer. Prenylated FMN is required as a cofactor. Requires Mn(2+) as cofactor.

The protein localises to the cell membrane. It carries out the reaction a 4-hydroxy-3-(all-trans-polyprenyl)benzoate + H(+) = a 2-(all-trans-polyprenyl)phenol + CO2. It functions in the pathway cofactor biosynthesis; ubiquinone biosynthesis. Its function is as follows. Catalyzes the decarboxylation of 3-octaprenyl-4-hydroxy benzoate to 2-octaprenylphenol, an intermediate step in ubiquinone biosynthesis. The protein is 3-octaprenyl-4-hydroxybenzoate carboxy-lyase of Pseudomonas savastanoi pv. phaseolicola (strain 1448A / Race 6) (Pseudomonas syringae pv. phaseolicola (strain 1448A / Race 6)).